We begin with the raw amino-acid sequence, 405 residues long: ATP phosphoribosyltransferase regulatory subunit (405 aa).

It belongs to the class-II aminoacyl-tRNA synthetase family. HisZ subfamily. In terms of assembly, heteromultimer composed of HisG and HisZ subunits.

The protein localises to the cytoplasm. The protein operates within amino-acid biosynthesis; L-histidine biosynthesis; L-histidine from 5-phospho-alpha-D-ribose 1-diphosphate: step 1/9. Required for the first step of histidine biosynthesis. May allow the feedback regulation of ATP phosphoribosyltransferase activity by histidine. The protein is ATP phosphoribosyltransferase regulatory subunit of Microcystis aeruginosa (strain NIES-843 / IAM M-2473).